The chain runs to 322 residues: MNDAKYGVLLVNLGTPDAPQPDAVKRYLAQFLSDPRVVDVSPWIWKPILHGVILPFRSPKVAKLYQQIWLPDGSPLLVYSRAQQKALAQRFAHIPVELGMCYGNPSLNEGLTRLLAQGVEKLIVLPLYPQYSCSTSGAVFDGISQLFKTMRTIPSLHFVRSYAQHPLYIKALVNSIDESFKQHGKPDRLVLSFHGIPERFIKTGDIYFDECCLTVEKLKQQLDYPAEKVMMTFQSRFGREPWLSPYTDKTMEKLGSEGVEHVQVICPGFSSDCLETLEEINEQNREFFIHGGGKQYEYIPALNDKVEHIDLLEAIIRDICEK.

Positions 194 and 275 each coordinate Fe cation.

This sequence belongs to the ferrochelatase family.

The protein localises to the cytoplasm. It catalyses the reaction heme b + 2 H(+) = protoporphyrin IX + Fe(2+). Its pathway is porphyrin-containing compound metabolism; protoheme biosynthesis; protoheme from protoporphyrin-IX: step 1/1. Catalyzes the ferrous insertion into protoporphyrin IX. This Proteus mirabilis (strain HI4320) protein is Ferrochelatase.